Reading from the N-terminus, the 157-residue chain is UPF0262 protein amb3341 (157 aa).

This sequence belongs to the UPF0262 family.

This Paramagnetospirillum magneticum (strain ATCC 700264 / AMB-1) (Magnetospirillum magneticum) protein is UPF0262 protein amb3341.